The chain runs to 56 residues: Preprotein translocase subunit SecG (56 aa).

Over Met-1 to Ser-29 the chain is Cytoplasmic. Residues Pro-30–Gly-51 form a helical membrane-spanning segment. The Extracellular portion of the chain corresponds to Pro-52–Gly-56.

This sequence belongs to the SEC61-beta family. Component of the protein translocase complex. Heterotrimer consisting of alpha (SecY), beta (SecG) and gamma (SecE) subunits. Can form oligomers of the heterotrimer.

The protein localises to the cell membrane. Functionally, involved in protein export. The function of the beta subunit is unknown, but it may be involved in stabilization of the trimeric complex. The sequence is that of Preprotein translocase subunit SecG from Thermococcus onnurineus (strain NA1).